The primary structure comprises 503 residues: Lysine--tRNA ligase (503 aa).

Mg(2+)-binding residues include Glu412 and Glu419.

It belongs to the class-II aminoacyl-tRNA synthetase family. In terms of assembly, homodimer. Requires Mg(2+) as cofactor.

Its subcellular location is the cytoplasm. The enzyme catalyses tRNA(Lys) + L-lysine + ATP = L-lysyl-tRNA(Lys) + AMP + diphosphate. This is Lysine--tRNA ligase from Buchnera aphidicola subsp. Schizaphis graminum (strain Sg).